A 428-amino-acid polypeptide reads, in one-letter code: Elongation factor 1-alpha (428 aa).

A tr-type G domain is found at 5 to 215 (KPHVNIVFIG…ALDQIPEPPK (211 aa)). The interval 14-21 (GHVDHGKS) is G1. GTP is bound at residue 14-21 (GHVDHGKS). Serine 21 contacts Mg(2+). Positions 68 to 72 (GITID) are G2. The segment at 89–92 (DAPG) is G3. Residues 89–93 (DAPGH) and 144–147 (NKMD) contribute to the GTP site. The G4 stretch occupies residues 144-147 (NKMD). Positions 181 to 183 (SAW) are G5.

This sequence belongs to the TRAFAC class translation factor GTPase superfamily. Classic translation factor GTPase family. EF-Tu/EF-1A subfamily.

Its subcellular location is the cytoplasm. It catalyses the reaction GTP + H2O = GDP + phosphate + H(+). Functionally, GTP hydrolase that promotes the GTP-dependent binding of aminoacyl-tRNA to the A-site of ribosomes during protein biosynthesis. The polypeptide is Elongation factor 1-alpha (Thermococcus kodakarensis (strain ATCC BAA-918 / JCM 12380 / KOD1) (Pyrococcus kodakaraensis (strain KOD1))).